We begin with the raw amino-acid sequence, 354 residues long: S-adenosylmethionine:tRNA ribosyltransferase-isomerase (354 aa).

Belongs to the QueA family. In terms of assembly, monomer.

It localises to the cytoplasm. The catalysed reaction is 7-aminomethyl-7-carbaguanosine(34) in tRNA + S-adenosyl-L-methionine = epoxyqueuosine(34) in tRNA + adenine + L-methionine + 2 H(+). The protein operates within tRNA modification; tRNA-queuosine biosynthesis. Functionally, transfers and isomerizes the ribose moiety from AdoMet to the 7-aminomethyl group of 7-deazaguanine (preQ1-tRNA) to give epoxyqueuosine (oQ-tRNA). In Klebsiella pneumoniae (strain 342), this protein is S-adenosylmethionine:tRNA ribosyltransferase-isomerase.